The chain runs to 31 residues: Photosystem I reaction center subunit XII (31 aa).

Residues 6–25 (TQILAALVVALLPAFLAFRL) form a helical membrane-spanning segment.

The protein belongs to the PsaM family.

It is found in the cellular thylakoid membrane. The polypeptide is Photosystem I reaction center subunit XII (Synechocystis sp. (strain ATCC 27184 / PCC 6803 / Kazusa)).